The chain runs to 66 residues: Nigrocin-2ISb (66 aa).

The signal sequence occupies residues 1 to 22 (MFTLKKSMLLLFFLGTINLSLC). Residues 23-43 (QEERDAEEERRDEDNAKMEEI) constitute a propeptide, removed in mature form. The cysteines at positions 60 and 66 are disulfide-linked.

As to expression, expressed by the skin glands.

It localises to the secreted. Functionally, has antimicrobial activity against Gram-negative bacterium E.coli ATCC 8739 (MIC=50 ug), against Gram positive bacteria S.aureus ATCC 6538 (MIC=3.1 ug), methicillin-resistant S.aureus ATCC 43300 (MIC=12.5 ug), B.subtilis ATCC 6633 (MIC=12.5 ug) and against fungus C.albicans ATCC 90028 (MIC=50 ug). This chain is Nigrocin-2ISb, found in Odorrana ishikawae (Ishikawa's frog).